Consider the following 139-residue polypeptide: Nucleoside diphosphate kinase (139 aa).

6 residues coordinate ATP: Lys-10, Phe-58, Arg-86, Thr-92, Arg-103, and Asn-113. His-116 functions as the Pros-phosphohistidine intermediate in the catalytic mechanism.

The protein belongs to the NDK family. As to quaternary structure, homotetramer. The cofactor is Mg(2+).

The protein resides in the cytoplasm. The catalysed reaction is a 2'-deoxyribonucleoside 5'-diphosphate + ATP = a 2'-deoxyribonucleoside 5'-triphosphate + ADP. It catalyses the reaction a ribonucleoside 5'-diphosphate + ATP = a ribonucleoside 5'-triphosphate + ADP. In terms of biological role, major role in the synthesis of nucleoside triphosphates other than ATP. The ATP gamma phosphate is transferred to the NDP beta phosphate via a ping-pong mechanism, using a phosphorylated active-site intermediate. The protein is Nucleoside diphosphate kinase of Desulfovibrio desulfuricans (strain ATCC 27774 / DSM 6949 / MB).